A 107-amino-acid polypeptide reads, in one-letter code: MQNETDVIKNFDQELNIEWEDKVMEPRMYRVILHNDHYTTMDFVVQILMTIFHKPAAQATRIMLDVHRKGQGVCGVYTYDIASTKIAQVHFMARQNEYPLRCSMDEV.

The protein belongs to the ClpS family. In terms of assembly, binds to the N-terminal domain of the chaperone ClpA.

In terms of biological role, involved in the modulation of the specificity of the ClpAP-mediated ATP-dependent protein degradation. This Syntrophus aciditrophicus (strain SB) protein is ATP-dependent Clp protease adapter protein ClpS.